The primary structure comprises 89 residues: Large ribosomal subunit protein bL27 (89 aa).

The disordered stretch occupies residues methionine 1–glycine 22.

Belongs to the bacterial ribosomal protein bL27 family.

The polypeptide is Large ribosomal subunit protein bL27 (Brucella melitensis biotype 1 (strain ATCC 23456 / CCUG 17765 / NCTC 10094 / 16M)).